The primary structure comprises 719 residues: Protein psiJ (719 aa).

An N-terminal signal peptide occupies residues Met-1–Gly-21. Residues Asp-22–Gly-653 lie on the Extracellular side of the membrane. Asn-46, Asn-59, Asn-86, Asn-113, Asn-301, Asn-372, Asn-435, Asn-457, Asn-562, and Asn-628 each carry an N-linked (GlcNAc...) asparagine glycan. In terms of domain architecture, PA14 spans Gln-112–Thr-260. Residues Val-654–Ala-674 form a helical membrane-spanning segment. At Leu-675–Thr-719 the chain is on the cytoplasmic side.

The protein belongs to the prespore-cell-inducing factor family.

Its subcellular location is the membrane. This is Protein psiJ (psiJ) from Dictyostelium discoideum (Social amoeba).